We begin with the raw amino-acid sequence, 1392 residues long: DNA-directed RNA polymerase subunit beta (1392 aa).

It belongs to the RNA polymerase beta chain family. In terms of assembly, the RNAP catalytic core consists of 2 alpha, 1 beta, 1 beta' and 1 omega subunit. When a sigma factor is associated with the core the holoenzyme is formed, which can initiate transcription.

It catalyses the reaction RNA(n) + a ribonucleoside 5'-triphosphate = RNA(n+1) + diphosphate. Functionally, DNA-dependent RNA polymerase catalyzes the transcription of DNA into RNA using the four ribonucleoside triphosphates as substrates. The protein is DNA-directed RNA polymerase subunit beta of Neisseria meningitidis serogroup A / serotype 4A (strain DSM 15465 / Z2491).